A 109-amino-acid chain; its full sequence is Putative polyketide cyclase (109 aa).

It to polyketide cyclases.

Functionally, involved in developmentally regulated synthesis of a compound biosynthetically related to polyketide antibiotics which is essential for spore color in Streptomyces halstedii. The protein is Putative polyketide cyclase (sch4) of Streptomyces halstedii.